A 389-amino-acid polypeptide reads, in one-letter code: MADNRRRRSLFDFLLFSVFLGLACLCLSPIPATAQRRKLRFSVNGEFKILQVADMHFANGAKTQCQNVLPSQRAHCSDLNTTIFMSRVIAAEKPDLIVFTGDNIFGFDVKDALKSINAAFAPAIASKIPWVAILGNHDQESTFTRQQVMNHIVKLPNTLSQVNPPEAAHYIDGFGNYNLQIHGAADSKLQNKSVLNLYFLDSGDYSSVPYMEGYDWIKTSQQFWFDRTSKRLKREYNAKPNPQEGIAPGLAYFHIPLPEFLSFDSKNATKGVRQEGTSAASTNSGFFTTLIARGDVKSVFVGHDHVNDFCGELKGLNLCYGGGFGYHAYGKAGWERRARVVVVDLNKKRKGKWGAVKSIKTWKRLDDKHLSVIDSQVLWNNSANKLVVR.

The N-terminal stretch at 1-34 (MADNRRRRSLFDFLLFSVFLGLACLCLSPIPATA) is a signal peptide. Asparagine 80 is a glycosylation site (N-linked (GlcNAc...) asparagine). Asparagine 136 serves as a coordination point for substrate. Position 136 (asparagine 136) interacts with Zn(2+). N-linked (GlcNAc...) asparagine glycans are attached at residues asparagine 191 and asparagine 267. Histidine 303 is a Zn(2+) binding site. 303 to 305 (HDH) is a binding site for substrate. Histidine 305 contributes to the Fe cation binding site. N-linked (GlcNAc...) asparagine glycosylation occurs at asparagine 380.

Belongs to the metallophosphoesterase superfamily. Purple acid phosphatase family. As to quaternary structure, homodimer. Requires Fe cation as cofactor. Zn(2+) is required as a cofactor. Expressed in roots, stems, leaves, flowers and siliques.

It is found in the secreted. This is Probable inactive purple acid phosphatase 29 (PAP29) from Arabidopsis thaliana (Mouse-ear cress).